The sequence spans 117 residues: Large ribosomal subunit protein bL20 (117 aa).

Belongs to the bacterial ribosomal protein bL20 family.

In terms of biological role, binds directly to 23S ribosomal RNA and is necessary for the in vitro assembly process of the 50S ribosomal subunit. It is not involved in the protein synthesizing functions of that subunit. This chain is Large ribosomal subunit protein bL20, found in Rickettsia canadensis (strain McKiel).